We begin with the raw amino-acid sequence, 257 residues long: Ras-related protein Rab-26 (257 aa).

Positions Met-1–Ser-53 are disordered. Positions 73, 74, 75, 76, 77, 78, 79, 96, and 97 each coordinate GTP. Mg(2+) is bound at residue Thr-78. 2 short sequence motifs (switch) span residues Gly-87 to Phe-102 and Asp-120 to Asp-137. Thr-97 and Asp-120 together coordinate Mg(2+). Residues Gly-123, Asn-178, Lys-179, Asp-181, Ala-209, and Lys-210 each contribute to the GTP site. Residues Cys-254 and Cys-255 are each lipidated (S-geranylgeranyl cysteine).

This sequence belongs to the small GTPase superfamily. Rab family. Interacts with ADRA2B. Interacts with RIMS1. Requires Mg(2+) as cofactor. Expressed in pancreas, kidney, brain, submandibular gland, and lung.

It is found in the cytoplasmic vesicle. It localises to the secretory vesicle membrane. Its subcellular location is the golgi apparatus membrane. It carries out the reaction GTP + H2O = GDP + phosphate + H(+). Its activity is regulated as follows. Regulated by guanine nucleotide exchange factors (GEFs) which promote the exchange of bound GDP for free GTP. Regulated by GTPase activating proteins (GAPs) which increase the GTP hydrolysis activity. Inhibited by GDP dissociation inhibitors (GDIs). Its function is as follows. The small GTPases Rab are key regulators of intracellular membrane trafficking, from the formation of transport vesicles to their fusion with membranes. Rabs cycle between an inactive GDP-bound form and an active GTP-bound form that is able to recruit to membranes different set of downstream effectors directly responsible for vesicle formation, movement, tethering and fusion. RAB26 mediates transport of ADRA2A and ADRA2B from the Golgi to the cell membrane. Plays a role in the maturation of zymogenic granules and in pepsinogen secretion in the stomach. Plays a role in the secretion of amylase from acinar granules in the parotid gland. The protein is Ras-related protein Rab-26 of Rattus norvegicus (Rat).